The primary structure comprises 188 residues: uncharacterized protein (188 aa).

Serine 14 is subject to Phosphoserine. The disordered stretch occupies residues 165 to 188 (RQAMAAKRNRFRKNVRKLPNKKKH). A compositionally biased stretch (basic residues) spans 171–188 (KRNRFRKNVRKLPNKKKH).

It is found in the nucleus. Its subcellular location is the nucleolus. This is an uncharacterized protein from Schizosaccharomyces pombe (strain 972 / ATCC 24843) (Fission yeast).